The following is a 171-amino-acid chain: LIM domain transcription factor LMO4-B (171 aa).

Residues 1 to 19 (MVNNRISESTTTAVSNNGS) show a composition bias toward polar residues. The interval 1 to 20 (MVNNRISESTTTAVSNNGSP) is disordered. 2 consecutive LIM zinc-binding domains span residues 22 to 84 (KACA…LFGN) and 86 to 148 (GACN…GLLN).

Functionally, acts as a positive cofactor of GATA transcription factors to establish the identity of the ventral mesoderm during gastrulation. Down-regulation in the dorsal mesoderm is necessary for the proper formation of this territory since, when present, lmo4 may bind ldb1 and restrict the availability of this cofactor for Spemman organizer transcription factors. At neurula stages, suppresses primary neuron differentiation and modulates gene expression at the Isthmic Organizer of the midbrain-hindbrain boundary. This is LIM domain transcription factor LMO4-B (lmo4-b) from Xenopus laevis (African clawed frog).